A 374-amino-acid chain; its full sequence is Tuliposide A-converting enzyme b1, amyloplastic (374 aa).

The transit peptide at 1–68 directs the protein to the amyloplast; that stretch reads MSVALFCGPP…TNSSLSPSPT (68 aa). The Acyl-ester intermediate role is filled by Ser-226. Residues Asp-316 and His-348 each act as charge relay system in the active site.

It belongs to the AB hydrolase superfamily. As to quaternary structure, homodimer. In terms of tissue distribution, highly expressed in pistil and bulb scales. Lower expression in stem, and barely detected in root, leaf, petal and stamen.

Its subcellular location is the plastid. It localises to the amyloplast. The catalysed reaction is 6-tuliposide A = tulipalin A + D-glucose. Functionally, lactone-forming carboxylesterases, specifically catalyzing intramolecular transesterification, but not hydrolysis. Involved in the biosynthesis of tulipalins, defensive chemicals that show antimicrobial activities against a broad range of strains of bacteria and fungi. Substrates are 6-tuliposide A &gt; 6-tuliposide B. The chain is Tuliposide A-converting enzyme b1, amyloplastic (TCEA-B1) from Tulipa gesneriana (Garden tulip).